Reading from the N-terminus, the 319-residue chain is MSSRSIVFMGTPEFACPTLQALIDRGERLLAVVTQPDRPKGRGHKLMPPPVKELALAHDIPVLQPHRVRASAFVESIRQLAPELIVVVAFGQILPKALLDIPPLGCVNVHASLLPRYRGAAPLNWCIINGETETGVTTMLMDTGLDTGPMLLKRSTPIDENEDIVSLHDRMASLGAELLAETLDGLREGRIEPQPQNDSLSCYAPLLKKEHGLIDWQRPARQIHNQVRGLAAWPGAQTLLNGHALKLFRTRVADGAGAPGTVLCSTGGQLEVACLDGSLLIQELQLAGKKRLDSASFLAGCPIAEGTLLGGAATERPIP.

Residue 112-115 (SLLP) participates in (6S)-5,6,7,8-tetrahydrofolate binding.

It belongs to the Fmt family.

The enzyme catalyses L-methionyl-tRNA(fMet) + (6R)-10-formyltetrahydrofolate = N-formyl-L-methionyl-tRNA(fMet) + (6S)-5,6,7,8-tetrahydrofolate + H(+). Its function is as follows. Attaches a formyl group to the free amino group of methionyl-tRNA(fMet). The formyl group appears to play a dual role in the initiator identity of N-formylmethionyl-tRNA by promoting its recognition by IF2 and preventing the misappropriation of this tRNA by the elongation apparatus. In Pelobacter propionicus (strain DSM 2379 / NBRC 103807 / OttBd1), this protein is Methionyl-tRNA formyltransferase.